The following is a 485-amino-acid chain: 3-isopropylmalate dehydratase large subunit (485 aa).

2 disordered regions span residues 1–20 (MSDA…QSTG) and 73–92 (PERT…RSLP). [4Fe-4S] cluster-binding residues include C364, C424, and C427.

The protein belongs to the aconitase/IPM isomerase family. LeuC type 1 subfamily. In terms of assembly, heterodimer of LeuC and LeuD. It depends on [4Fe-4S] cluster as a cofactor.

It carries out the reaction (2R,3S)-3-isopropylmalate = (2S)-2-isopropylmalate. The protein operates within amino-acid biosynthesis; L-leucine biosynthesis; L-leucine from 3-methyl-2-oxobutanoate: step 2/4. In terms of biological role, catalyzes the isomerization between 2-isopropylmalate and 3-isopropylmalate, via the formation of 2-isopropylmaleate. The sequence is that of 3-isopropylmalate dehydratase large subunit from Rhodopirellula baltica (strain DSM 10527 / NCIMB 13988 / SH1).